We begin with the raw amino-acid sequence, 142 residues long: Large ribosomal subunit protein uL11 (142 aa).

Belongs to the universal ribosomal protein uL11 family. As to quaternary structure, part of the ribosomal stalk of the 50S ribosomal subunit. Interacts with L10 and the large rRNA to form the base of the stalk. L10 forms an elongated spine to which L12 dimers bind in a sequential fashion forming a multimeric L10(L12)X complex. In terms of processing, one or more lysine residues are methylated.

Forms part of the ribosomal stalk which helps the ribosome interact with GTP-bound translation factors. The chain is Large ribosomal subunit protein uL11 from Haemophilus ducreyi (strain 35000HP / ATCC 700724).